The chain runs to 708 residues: MSNLLVELFVEELPPKALQNIGISFADQIYHSLVTQDLIEPPSELDAANPSPWKWFASPRRIAVWIRNVTQKAPDKQLAQKLMPASVGLDADGNATPALLKKLAALGADESAVSQLKREHDGKAEVLLLDRTVRGATLAEGLQKALDEAIAKLPIPKVMTYQLEDGWSNVNFVRPAHGLVALHGNEVVPIRALGLTAGNRTQGHRFEATQSPIVLRNADSYAEQLQQDGAVIPGFKERRDEIARQLEAAAGKLKLRPIEDEALLEEVTALVERPNVLVGQFEQAFLAVPQECLILTMKANQKYFPLLDAQGRLTNKFLIVSNISPADPSAVVGGNERVVRPRLADAKFFFEQDRKKTLESRIPGLSKVVYHNKLGSQGERIARVSEIANLVGTALGDQTLAAQASQAAQLAKADLVTDMVGEFPELQGIMGRYYAQHEGLSDDIAYAIEDHYRPRFSGDALPRNKVGMIVALADKLETLAGLFSIGEKPTGEKDPFALRRHAIGILRILTEGGLSLPLNTLLEQTLSVFQHEFDHDTALQAVEEFIFDRLSGSLRDQGYSVQEVDAVLAMKPQLLGDITKRLEAVRAFASLPEAASLAAANKRVGNILKKSDSAIEAAINPALLQEDAEKTLAQALAQVQPQAQQAFAAGDYTGSLKALAALKAPVDAFFDHVMVNAEDPALKTNRLALLATLHQAMNQVADLSRLAA.

It belongs to the class-II aminoacyl-tRNA synthetase family. As to quaternary structure, tetramer of two alpha and two beta subunits.

It localises to the cytoplasm. The enzyme catalyses tRNA(Gly) + glycine + ATP = glycyl-tRNA(Gly) + AMP + diphosphate. The chain is Glycine--tRNA ligase beta subunit from Methylobacillus flagellatus (strain ATCC 51484 / DSM 6875 / VKM B-1610 / KT).